Here is a 258-residue protein sequence, read N- to C-terminus: Regulatory protein RecX (258 aa).

The protein belongs to the RecX family.

It is found in the cytoplasm. Functionally, modulates RecA activity. The sequence is that of Regulatory protein RecX from Streptococcus pneumoniae (strain P1031).